We begin with the raw amino-acid sequence, 150 residues long: Large ribosomal subunit protein bL9 (150 aa).

The protein belongs to the bacterial ribosomal protein bL9 family.

Binds to the 23S rRNA. The polypeptide is Large ribosomal subunit protein bL9 (Burkholderia mallei (strain NCTC 10247)).